A 340-amino-acid polypeptide reads, in one-letter code: MNVFEPRLSSWLVNSGDDDDVVLSSRIRLARNLKDERFPIYEQKEAIVDNIAEVFDENFTLFKMNQISVLQKALLVEKHLISPYMMKKSKYGAVLLNEEENVSIMLNEEDHLRIQCMTPGLRLFDALEAALQIDGHVEEKLTYAFDKQFGYLTSCVTNIGTGLRASVMVHLPGLVTTKRIKSVIEAIRSLGFVVRGIYGEGSMPASSIFQVSNQVTLGKTETEIVEDLTQVMEQIIMQERVARTTLKQKFHIALEDRVFRSYGLLMNCRIISMQEAADAISDIRLGVELGFFEHISRQKMNELVLFSQPAFLRKEAGRDMDELEEKVIRAKVIREILGDK.

A Phosphagen kinase C-terminal domain is found at 21-242 (VVLSSRIRLA…EQIIMQERVA (222 aa)). ATP contacts are provided by residues 24–28 (SSRIR), His79, Arg113, 164–168 (RASVM), and 195–200 (RGIYGE).

Belongs to the ATP:guanido phosphotransferase family.

It carries out the reaction L-arginyl-[protein] + ATP = N(omega)-phospho-L-arginyl-[protein] + ADP + H(+). Catalyzes the specific phosphorylation of arginine residues in proteins. This Listeria welshimeri serovar 6b (strain ATCC 35897 / DSM 20650 / CCUG 15529 / CIP 8149 / NCTC 11857 / SLCC 5334 / V8) protein is Protein-arginine kinase.